Reading from the N-terminus, the 165-residue chain is Protein SprT (165 aa).

One can recognise a SprT-like domain in the interval 20 to 163; that stretch reads EKLTQANLKL…RCVHCGEQLV (144 aa). His78 contributes to the Zn(2+) binding site. Glu79 is a catalytic residue. Zn(2+) is bound at residue His82.

Belongs to the SprT family. The cofactor is Zn(2+).

It localises to the cytoplasm. In Escherichia coli O139:H28 (strain E24377A / ETEC), this protein is Protein SprT.